We begin with the raw amino-acid sequence, 217 residues long: Vesicle transport through interaction with t-SNAREs homolog 1A (217 aa).

Topologically, residues 1 to 192 (MDVFERTEQN…TGIARRLATN (192 aa)) are cytoplasmic. Positions 36-97 (AVREVENDID…AQLQSSNQTN (62 aa)) form a coiled coil. The tract at residues 90 to 109 (LQSSNQTNSNPWSNAPDDYQ) is disordered. Positions 123-185 (SNMLDSTSDR…KSARKIMTGI (63 aa)) constitute a t-SNARE coiled-coil homology domain. A helical; Anchor for type IV membrane protein transmembrane segment spans residues 193-213 (KVILSIIILLLMGIIALIICL). The Vesicular portion of the chain corresponds to 214–217 (KWLR).

The protein belongs to the VTI1 family. In terms of assembly, component of the SNARE complex composed of syn7A, syn8A, vamp7A and vti1A.

The protein resides in the membrane. Its subcellular location is the cytoplasmic vesicle. The protein localises to the secretory vesicle membrane. It localises to the clathrin-coated vesicle membrane. It is found in the endosome membrane. The protein resides in the endoplasmic reticulum membrane. In terms of biological role, V-SNARE that mediates vesicle transport pathways through interactions with t-SNAREs on the target membrane. These interactions are proposed to mediate aspects of the specificity of vesicle trafficking and to promote fusion of the lipid bilayers. The protein is Vesicle transport through interaction with t-SNAREs homolog 1A of Dictyostelium discoideum (Social amoeba).